Consider the following 475-residue polypeptide: Deoxyguanosinetriphosphate triphosphohydrolase-like protein (475 aa).

Positions 118–272 (RLTHTLEVAQ…MDLSDDIAYS (155 aa)) constitute an HD domain.

The protein belongs to the dGTPase family. Type 2 subfamily.

In Bifidobacterium longum (strain NCC 2705), this protein is Deoxyguanosinetriphosphate triphosphohydrolase-like protein (dgt).